Consider the following 296-residue polypeptide: MKVRVKAPCTSANLGVGFDVFGLCLKEPYDVIEVEAIDDKEIIIEVDDKNIPTDPDKNVAGIVAKKMIDDFNIGKGVKITIKKGVKAGSGLGSSAASSAGTAYAINELFKLNLDKLKLVDYASYGELASSGAKHADNVAPAIFGGFTMVTNYEPLEVLHIPIDFKLDILIAIPNISINTKEAREILPKAVGLKDLVNNVGKACGMVYALYNKDKSLFGRYMMSDKVIEPVRGKLIPNYFKIKEEVKDKVYGITISGSGPSIIAFPKEEFIDEVENILRDYYENTIRTEVGKGVEVV.

86 to 96 (KAGSGLGSSAA) provides a ligand contact to ATP.

It belongs to the GHMP kinase family. Homoserine kinase subfamily.

The protein resides in the cytoplasm. It catalyses the reaction L-homoserine + ATP = O-phospho-L-homoserine + ADP + H(+). Its pathway is amino-acid biosynthesis; L-threonine biosynthesis; L-threonine from L-aspartate: step 4/5. Its function is as follows. Catalyzes the ATP-dependent phosphorylation of L-homoserine to L-homoserine phosphate. This is Homoserine kinase (thrB) from Methanocaldococcus jannaschii (strain ATCC 43067 / DSM 2661 / JAL-1 / JCM 10045 / NBRC 100440) (Methanococcus jannaschii).